Reading from the N-terminus, the 572-residue chain is Arginine--tRNA ligase (572 aa).

Positions 127–137 (ANPTGPLHVGH) match the 'HIGH' region motif.

This sequence belongs to the class-I aminoacyl-tRNA synthetase family. Monomer.

The protein resides in the cytoplasm. It carries out the reaction tRNA(Arg) + L-arginine + ATP = L-arginyl-tRNA(Arg) + AMP + diphosphate. The polypeptide is Arginine--tRNA ligase (Vesicomyosocius okutanii subsp. Calyptogena okutanii (strain HA)).